A 121-amino-acid polypeptide reads, in one-letter code: Small ribosomal subunit protein uS13 (121 aa).

The tract at residues 94–121 (RGLPVRGQSTKNNARTRKGPKRTVGAKR) is disordered. The span at 107-121 (ARTRKGPKRTVGAKR) shows a compositional bias: basic residues.

This sequence belongs to the universal ribosomal protein uS13 family. As to quaternary structure, part of the 30S ribosomal subunit. Forms a loose heterodimer with protein S19. Forms two bridges to the 50S subunit in the 70S ribosome.

Its function is as follows. Located at the top of the head of the 30S subunit, it contacts several helices of the 16S rRNA. In the 70S ribosome it contacts the 23S rRNA (bridge B1a) and protein L5 of the 50S subunit (bridge B1b), connecting the 2 subunits; these bridges are implicated in subunit movement. Contacts the tRNAs in the A and P-sites. This is Small ribosomal subunit protein uS13 from Natranaerobius thermophilus (strain ATCC BAA-1301 / DSM 18059 / JW/NM-WN-LF).